The sequence spans 130 residues: UPF0102 protein SCO5602 (130 aa).

The protein belongs to the UPF0102 family.

In Streptomyces coelicolor (strain ATCC BAA-471 / A3(2) / M145), this protein is UPF0102 protein SCO5602.